Here is a 273-residue protein sequence, read N- to C-terminus: Putative esterase/lipase 3 (273 aa).

Residue His-34 is part of the active site. Ser-100 (charge relay system) is an active-site residue.

It belongs to the lipase/esterase LIP3/BchO family.

In Mycoplasma genitalium (strain ATCC 33530 / DSM 19775 / NCTC 10195 / G37) (Mycoplasmoides genitalium), this protein is Putative esterase/lipase 3.